Reading from the N-terminus, the 421-residue chain is 2',3'-cyclic-nucleotide 3'-phosphodiesterase (421 aa).

Phosphoserine is present on residues Ser6 and Ser9. Residue Tyr110 is modified to Phosphotyrosine. Ser170 bears the Phosphoserine mark. His251 functions as the Proton acceptor in the catalytic mechanism. Thr253 is a substrate binding site. The active-site Proton donor is the His330. Position 332 (Thr332) interacts with substrate. Phosphoserine is present on Ser359. Cys418 is modified (cysteine methyl ester). Cys418 is lipidated: S-farnesyl cysteine. Residues 419–421 constitute a propeptide, removed in mature form; it reads TII.

This sequence belongs to the 2H phosphoesterase superfamily. CNPase family. In terms of assembly, exists as monomers and homodimers.

It is found in the membrane. The protein resides in the melanosome. The enzyme catalyses a nucleoside 2',3'-cyclic phosphate + H2O = a nucleoside 2'-phosphate + H(+). Catalyzes the formation of 2'-nucleotide products from 2',3'-cyclic substrates. May participate in RNA metabolism in the myelinating cell, CNP is the third most abundant protein in central nervous system myelin. In Homo sapiens (Human), this protein is 2',3'-cyclic-nucleotide 3'-phosphodiesterase.